The following is a 325-amino-acid chain: Polyamine aminopropyltransferase (325 aa).

The PABS domain occupies 11–248; it reads SSMAEDFAVE…TLWAMAMASD (238 aa). Gln44 is an S-methyl-5'-thioadenosine binding site. The spermidine site is built by His75 and Asp99. S-methyl-5'-thioadenosine-binding positions include Glu119 and 151–152; that span reads DG. Asp169 serves as the catalytic Proton acceptor. Pro176 lines the S-methyl-5'-thioadenosine pocket.

Belongs to the spermidine/spermine synthase family. As to quaternary structure, homodimer or homotetramer.

It localises to the cytoplasm. It catalyses the reaction S-adenosyl 3-(methylsulfanyl)propylamine + putrescine = S-methyl-5'-thioadenosine + spermidine + H(+). It participates in amine and polyamine biosynthesis; spermidine biosynthesis; spermidine from putrescine: step 1/1. In terms of biological role, catalyzes the irreversible transfer of a propylamine group from the amino donor S-adenosylmethioninamine (decarboxy-AdoMet) to putrescine (1,4-diaminobutane) to yield spermidine. The sequence is that of Polyamine aminopropyltransferase from Nitrosomonas europaea (strain ATCC 19718 / CIP 103999 / KCTC 2705 / NBRC 14298).